Consider the following 270-residue polypeptide: 2-epi-5-epi-valiolone 7-phosphate 2-epimerase (270 aa).

Active-site proton donor/acceptor residues include E143 and E236.

The protein belongs to the hyi family.

It carries out the reaction 2-epi-5-epi-valiolone 7-phosphate = 5-epi-valiolone 7-phosphate. Functionally, involved in the biosynthesis of the alpha-glucosidase inhibitor acarbose. Catalyzes the 2-epimerisation of 2-epi-5-epivaliolone 7-phosphate to yield 5-epi-valiolone 7-phosphate. The protein is 2-epi-5-epi-valiolone 7-phosphate 2-epimerase (acbO) of Actinoplanes sp. (strain ATCC 31044 / CBS 674.73 / SE50/110).